We begin with the raw amino-acid sequence, 294 residues long: Glycine-rich protein 2 (294 aa).

The N-terminal stretch at 1–20 (MKMWFRLATFVTLIIEFAHC) is a signal peptide. The span at 205-221 (TGSQTGAAANGTSAGAA) shows a compositional bias: low complexity. Residues 205-225 (TGSQTGAAANGTSAGAAVRGG) form a disordered region.

As to expression, nacreous layer of shell (at protein level). Expressed primarily in the mantle with highest level in the mantle pallium and lower level in the mantle edge.

The protein localises to the secreted. This Pinctada maxima (Silver-lipped pearl oyster) protein is Glycine-rich protein 2.